A 487-amino-acid chain; its full sequence is Glutamyl-tRNA(Gln) amidotransferase subunit A (487 aa).

Residues Lys74 and Ser149 each act as charge relay system in the active site. The active-site Acyl-ester intermediate is Ser173.

The protein belongs to the amidase family. GatA subfamily. Heterotrimer of A, B and C subunits.

It catalyses the reaction L-glutamyl-tRNA(Gln) + L-glutamine + ATP + H2O = L-glutaminyl-tRNA(Gln) + L-glutamate + ADP + phosphate + H(+). Its function is as follows. Allows the formation of correctly charged Gln-tRNA(Gln) through the transamidation of misacylated Glu-tRNA(Gln) in organisms which lack glutaminyl-tRNA synthetase. The reaction takes place in the presence of glutamine and ATP through an activated gamma-phospho-Glu-tRNA(Gln). The chain is Glutamyl-tRNA(Gln) amidotransferase subunit A from Prochlorococcus marinus (strain MIT 9211).